Reading from the N-terminus, the 337-residue chain is tRNA N6-adenosine threonylcarbamoyltransferase (337 aa).

Fe cation-binding residues include His111 and His115. Residues 134–138 (LVSGG), Asp167, Gly180, and Asn272 contribute to the substrate site. Asp300 lines the Fe cation pocket.

Belongs to the KAE1 / TsaD family. The cofactor is Fe(2+).

The protein resides in the cytoplasm. It carries out the reaction L-threonylcarbamoyladenylate + adenosine(37) in tRNA = N(6)-L-threonylcarbamoyladenosine(37) in tRNA + AMP + H(+). In terms of biological role, required for the formation of a threonylcarbamoyl group on adenosine at position 37 (t(6)A37) in tRNAs that read codons beginning with adenine. Is involved in the transfer of the threonylcarbamoyl moiety of threonylcarbamoyl-AMP (TC-AMP) to the N6 group of A37, together with TsaE and TsaB. TsaD likely plays a direct catalytic role in this reaction. The sequence is that of tRNA N6-adenosine threonylcarbamoyltransferase from Enterobacter sp. (strain 638).